Here is a 358-residue protein sequence, read N- to C-terminus: tRNA pseudouridine synthase B (358 aa).

The interval M1–V50 is disordered. The active-site Nucleophile is the D87.

The protein belongs to the pseudouridine synthase TruB family. Type 1 subfamily.

The enzyme catalyses uridine(55) in tRNA = pseudouridine(55) in tRNA. Responsible for synthesis of pseudouridine from uracil-55 in the psi GC loop of transfer RNAs. This chain is tRNA pseudouridine synthase B, found in Nitrobacter winogradskyi (strain ATCC 25391 / DSM 10237 / CIP 104748 / NCIMB 11846 / Nb-255).